A 365-amino-acid chain; its full sequence is Protein RecA (365 aa).

73 to 80 (GPESSGKT) is an ATP binding site.

The protein belongs to the RecA family.

It localises to the cytoplasm. Its function is as follows. Can catalyze the hydrolysis of ATP in the presence of single-stranded DNA, the ATP-dependent uptake of single-stranded DNA by duplex DNA, and the ATP-dependent hybridization of homologous single-stranded DNAs. It interacts with LexA causing its activation and leading to its autocatalytic cleavage. The sequence is that of Protein RecA from Prochlorococcus marinus (strain MIT 9301).